The following is a 167-amino-acid chain: Large ribosomal subunit protein uL10 (167 aa).

This sequence belongs to the universal ribosomal protein uL10 family. In terms of assembly, part of the ribosomal stalk of the 50S ribosomal subunit. The N-terminus interacts with L11 and the large rRNA to form the base of the stalk. The C-terminus forms an elongated spine to which L12 dimers bind in a sequential fashion forming a multimeric L10(L12)X complex.

Functionally, forms part of the ribosomal stalk, playing a central role in the interaction of the ribosome with GTP-bound translation factors. The polypeptide is Large ribosomal subunit protein uL10 (Erwinia tasmaniensis (strain DSM 17950 / CFBP 7177 / CIP 109463 / NCPPB 4357 / Et1/99)).